The primary structure comprises 356 residues: MKELVNILDFLPEELGEKIKPMFRVKQIYQWIYQKYANNFSDMSSLPKDLRLELARNFHFSPVKCVKNEQSKDGSIKYLFELIDGLRVESVLLPMKEEKIDAEGKRISHARYTICVSSQVGCKSGCSFCLTAKGGLKRNLSAGEIVGQILWIKKQNNIPYERRVNIVYMGMGEPLDNLKNVSKAVKILAQNEGLAISPRRQTISTSGLAKQIKELGQMNLGVLLAISLHAVNDELRTELMPINKAYNIAAIMDAVREFPIDQRKRVMFEYLLIDGINDKLEHAKELVKLLNGIKAKVNLILFNPHEGSLYKRPSLENAIKFQDLLSNKGVTCTIRESKGLDISAACGQLKERAKEQ.

Catalysis depends on glutamate 89, which acts as the Proton acceptor. Positions 108-341 (SHARYTICVS…CTIRESKGLD (234 aa)) constitute a Radical SAM core domain. The cysteines at positions 115 and 346 are disulfide-linked. [4Fe-4S] cluster contacts are provided by cysteine 122, cysteine 126, and cysteine 129. Residues 172–173 (GE), serine 204, 227–229 (SLH), and asparagine 303 contribute to the S-adenosyl-L-methionine site. The active-site S-methylcysteine intermediate is the cysteine 346.

It belongs to the radical SAM superfamily. RlmN family. Requires [4Fe-4S] cluster as cofactor.

It localises to the cytoplasm. The catalysed reaction is adenosine(2503) in 23S rRNA + 2 reduced [2Fe-2S]-[ferredoxin] + 2 S-adenosyl-L-methionine = 2-methyladenosine(2503) in 23S rRNA + 5'-deoxyadenosine + L-methionine + 2 oxidized [2Fe-2S]-[ferredoxin] + S-adenosyl-L-homocysteine. It catalyses the reaction adenosine(37) in tRNA + 2 reduced [2Fe-2S]-[ferredoxin] + 2 S-adenosyl-L-methionine = 2-methyladenosine(37) in tRNA + 5'-deoxyadenosine + L-methionine + 2 oxidized [2Fe-2S]-[ferredoxin] + S-adenosyl-L-homocysteine. In terms of biological role, specifically methylates position 2 of adenine 2503 in 23S rRNA and position 2 of adenine 37 in tRNAs. m2A2503 modification seems to play a crucial role in the proofreading step occurring at the peptidyl transferase center and thus would serve to optimize ribosomal fidelity. This is Dual-specificity RNA methyltransferase RlmN from Campylobacter jejuni subsp. jejuni serotype O:2 (strain ATCC 700819 / NCTC 11168).